Reading from the N-terminus, the 236-residue chain is UPF0257 lipoprotein YnfC (236 aa).

The N-terminal stretch at 1-16 is a signal peptide; it reads MKKPLLLTLLCMILAG. Residue Cys-17 is the site of N-palmitoyl cysteine attachment. Cys-17 is lipidated: S-diacylglycerol cysteine.

The protein belongs to the UPF0257 family.

Its subcellular location is the cell membrane. The chain is UPF0257 lipoprotein YnfC from Salmonella typhi.